A 234-amino-acid polypeptide reads, in one-letter code: MKIIVVKNASELGKQAFDLLAKAVDEGAKTLGLATGSSPVELYQEIVASQLDFSQMTSVNLDEYVGLSPENPQSYHYFMNQHLFQYKPFKRSYLPDGQTKDIQAECGRYNQILAENPVDLQVLGIGQNGHIAFNEPGTPFDSVTHEVALTESTIKANARFFNSIDEVPKSAICMGIANIMAAKEIVLLAKGESKAKAIKDMVEGPVTTDVPASVLQKHPNVTVIADQAAASLLK.

The active-site Proton acceptor; for enolization step is the aspartate 62. Residue asparagine 128 is the For ring-opening step of the active site. Histidine 130 acts as the Proton acceptor; for ring-opening step in catalysis. Glutamate 135 functions as the For ring-opening step in the catalytic mechanism.

It belongs to the glucosamine/galactosamine-6-phosphate isomerase family. NagB subfamily.

It carries out the reaction alpha-D-glucosamine 6-phosphate + H2O = beta-D-fructose 6-phosphate + NH4(+). It participates in amino-sugar metabolism; N-acetylneuraminate degradation; D-fructose 6-phosphate from N-acetylneuraminate: step 5/5. Functionally, catalyzes the reversible isomerization-deamination of glucosamine 6-phosphate (GlcN6P) to form fructose 6-phosphate (Fru6P) and ammonium ion. The protein is Glucosamine-6-phosphate deaminase of Lactobacillus delbrueckii subsp. bulgaricus (strain ATCC 11842 / DSM 20081 / BCRC 10696 / JCM 1002 / NBRC 13953 / NCIMB 11778 / NCTC 12712 / WDCM 00102 / Lb 14).